A 167-amino-acid polypeptide reads, in one-letter code: Xanthine-guanine phosphoribosyltransferase (167 aa).

Residues 47–48 (RG), Q79, and 102–110 (DDLVDSGKT) each bind 5-phospho-alpha-D-ribose 1-diphosphate. Q79 provides a ligand contact to GMP. Mg(2+) is bound at residue D103. Residues D106 and I149 each coordinate guanine. D106 and I149 together coordinate xanthine. Residues 106 to 110 (DSGKT) and 148 to 149 (WI) contribute to the GMP site.

The protein belongs to the purine/pyrimidine phosphoribosyltransferase family. XGPT subfamily. Homotetramer. Requires Mg(2+) as cofactor.

Its subcellular location is the cell inner membrane. The enzyme catalyses GMP + diphosphate = guanine + 5-phospho-alpha-D-ribose 1-diphosphate. It catalyses the reaction XMP + diphosphate = xanthine + 5-phospho-alpha-D-ribose 1-diphosphate. It carries out the reaction IMP + diphosphate = hypoxanthine + 5-phospho-alpha-D-ribose 1-diphosphate. It participates in purine metabolism; GMP biosynthesis via salvage pathway; GMP from guanine: step 1/1. Its pathway is purine metabolism; XMP biosynthesis via salvage pathway; XMP from xanthine: step 1/1. In terms of biological role, purine salvage pathway enzyme that catalyzes the transfer of the ribosyl-5-phosphate group from 5-phospho-alpha-D-ribose 1-diphosphate (PRPP) to the N9 position of the 6-oxopurines guanine and xanthine to form the corresponding ribonucleotides GMP (guanosine 5'-monophosphate) and XMP (xanthosine 5'-monophosphate), with the release of PPi. To a lesser extent, also acts on hypoxanthine. This is Xanthine-guanine phosphoribosyltransferase from Cereibacter sphaeroides (strain ATCC 17025 / ATH 2.4.3) (Rhodobacter sphaeroides).